Here is a 517-residue protein sequence, read N- to C-terminus: Anthranilate--CoA ligase (517 aa).

161-172 contributes to the AMP binding site; it reads LQYTSGSTGAPK.

It belongs to the ATP-dependent AMP-binding enzyme family. Monomer.

It carries out the reaction anthranilate + ATP + CoA = anthraniloyl-CoA + AMP + diphosphate. Its function is as follows. Catalyzes the formation of anthraniloyl-CoA, which is the priming step for entry into the Pseudomonas quinolone signal (PQS) biosynthetic pathway. Also active on a variety of aromatic substrates, including benzoate and chloro and fluoro derivatives of anthranilate. This Pseudomonas aeruginosa (strain ATCC 15692 / DSM 22644 / CIP 104116 / JCM 14847 / LMG 12228 / 1C / PRS 101 / PAO1) protein is Anthranilate--CoA ligase (pqsA).